The sequence spans 282 residues: Hydroxyacylglutathione hydrolase-like protein (282 aa).

7 residues coordinate Zn(2+): His-54, His-56, Asp-58, His-59, His-110, Asp-134, and His-173.

It belongs to the metallo-beta-lactamase superfamily. Glyoxalase II family. It depends on Zn(2+) as a cofactor.

Its function is as follows. Hydrolase acting on ester bonds. This is Hydroxyacylglutathione hydrolase-like protein (HAGHL) from Gallus gallus (Chicken).